The following is a 72-amino-acid chain: UPF0346 protein EF_1680 (72 aa).

This sequence belongs to the UPF0346 family.

This is UPF0346 protein EF_1680 from Enterococcus faecalis (strain ATCC 700802 / V583).